A 931-amino-acid polypeptide reads, in one-letter code: Short transient receptor potential channel 6 (931 aa).

Over residues 1-23 (MSQSPAFGPRRGSSPRGAAGAAA) the composition is skewed to low complexity. Positions 1 to 26 (MSQSPAFGPRRGSSPRGAAGAAARRN) are disordered. At 1–438 (MSQSPAFGPR…CSKMGKIMRG (438 aa)) the chain is on the cytoplasmic side. ANK repeat units lie at residues 97-126 (IEEE…SLNV), 132-161 (MGQN…LSRV), 163-189 (DALL…FAEG), and 218-247 (HDVT…RIER). The helical transmembrane segment at 439-459 (PFMKFVAHAASFTIFLGLLVM) threads the bilayer. The Extracellular segment spans residues 460–487 (NAADRFEGTKLLPNETSTDNAKQLFRMK). Residue Asn473 is glycosylated (N-linked (GlcNAc...) asparagine). A helical transmembrane segment spans residues 488–508 (TSCFSWMEMLIISWVIGMIWA). Residues 509 to 521 (ECKEIWTQGPKEY) are Cytoplasmic-facing. A helical membrane pass occupies residues 522-542 (LFELWNMLDFGMLAIFAASFI). Topologically, residues 543–592 (ARFMAFWHASKAQSIIDANDTLKDLTKVTLGDNVKYYNLARIKWDPSDPQ) are extracellular. Asn561 carries N-linked (GlcNAc...) asparagine glycosylation. The helical transmembrane segment at 593–613 (IISEGLYAIAVVLSFSRIAYI) threads the bilayer. Residues 614 to 636 (LPANESFGPLQISLGRTVKDIFK) lie on the Cytoplasmic side of the membrane. The chain crosses the membrane as a helical span at residues 637-657 (FMVIFIMVFVAFMIGMFNLYS). The Extracellular segment spans residues 658–706 (YYIGAKQNEAFTTVEESFKTLFWAIFGLSEVKSVVINYNHKFIENIGYV). The helical transmembrane segment at 707–727 (LYGVYNVTMVIVLLNMLIAMI) threads the bilayer. The Cytoplasmic portion of the chain corresponds to 728–931 (NSSFQEIEDD…MEPNQEETNR (204 aa)). Ser815 is modified (phosphoserine).

This sequence belongs to the transient receptor (TC 1.A.4) family. STrpC subfamily. TRPC6 sub-subfamily. In terms of assembly, homodimer; forms channel complex. Interacts with MX1 and RNF24. In terms of processing, phosphorylated by FYN, leading to an increase of TRPC6 channel activity. As to expression, expressed primarily in placenta, lung, spleen, ovary and small intestine. Expressed in podocytes and is a component of the glomerular slit diaphragm.

Its subcellular location is the cell membrane. It catalyses the reaction Ca(2+)(in) = Ca(2+)(out). Its activity is regulated as follows. Activated by diacylglycerol (DAG) in a membrane-delimited fashion, independently of protein kinase C. Forms a receptor-activated non-selective calcium permeant cation channel. Probably is operated by a phosphatidylinositol second messenger system activated by receptor tyrosine kinases or G-protein coupled receptors. Activated by diacylglycerol (DAG) in a membrane-delimited fashion, independently of protein kinase C. Seems not to be activated by intracellular calcium store depletion. The protein is Short transient receptor potential channel 6 of Homo sapiens (Human).